A 419-amino-acid chain; its full sequence is Multidrug efflux pump Tap (419 aa).

12 consecutive transmembrane segments (helical) span residues 7 to 29 (GPAFLILFATLMAAAGDGVSIVA), 44 to 66 (ASIVASATMLPLLFATLVAGTAV), 73 to 95 (RVSMVADALSGAAVAGVPLVAWG), 100 to 122 (AVNVLVLAVLAALAAAFGPAGMT), 149 to 171 (ILNLAFIVGPAIGGLMIATVGGI), 175 to 197 (WITATAFGLSILAIAALQLEGAG), 218 to 240 (FVWNLRVLRTLGMIDLTVTALYL), 260 to 282 (LGWALMAIAGGGLVGALGYAVLA), 289 to 308 (VTMSTAVLTLGLASMVIAFL), 313 to 335 (VIMVLCAVVGLVYGPIQPIYNYV), 348 to 370 (VVGVMTSLAYAAGPLGLLLAGPL), and 375 to 397 (GLHATFLALALPIVCTGLVAIRL).

It belongs to the major facilitator superfamily. Drug:H(+) antiporter-3 (DHA3) (TC 2.A.1.21) family.

Its subcellular location is the cell inner membrane. Its activity is regulated as follows. Inhibited by piperine, verapamil and verapamil analogs. Functionally, efflux pump that contributes to intrinsic antibiotic resistance. The pump uses the electrochemical gradient as a source of energy. Confers resistance to rifampicin. Confers low-level resistance to tetracycline and to several aminoglycosides, including streptomycin, gentamicin, 2'-N-ethylnetilmicin and 6'-N-ethylnetilmicin. This is Multidrug efflux pump Tap from Mycobacterium tuberculosis (strain ATCC 25618 / H37Rv).